The following is a 101-amino-acid chain: MDKSKRLFLKSKRSFRRRLPPIQSGDRIDYRNMSLISRFISEQGKILSRRVNRLTLKQQRLITIAIKQARILSLLPFLNNEKQFERSESTTRTTALRTRNK.

Belongs to the bacterial ribosomal protein bS18 family. In terms of assembly, part of the 30S ribosomal subunit.

It localises to the plastid. It is found in the chloroplast. This chain is Small ribosomal subunit protein bS18c, found in Gossypium barbadense (Sea Island cotton).